The sequence spans 701 residues: Elongation factor G (701 aa).

The region spanning 8-290 (ERYRNIGISA…AVVDYLPAPT (283 aa)) is the tr-type G domain. Residues 17-24 (AHIDAGKT), 88-92 (DTPGH), and 142-145 (NKMD) each bind GTP.

It belongs to the TRAFAC class translation factor GTPase superfamily. Classic translation factor GTPase family. EF-G/EF-2 subfamily.

It is found in the cytoplasm. Catalyzes the GTP-dependent ribosomal translocation step during translation elongation. During this step, the ribosome changes from the pre-translocational (PRE) to the post-translocational (POST) state as the newly formed A-site-bound peptidyl-tRNA and P-site-bound deacylated tRNA move to the P and E sites, respectively. Catalyzes the coordinated movement of the two tRNA molecules, the mRNA and conformational changes in the ribosome. This is Elongation factor G from Aeromonas hydrophila subsp. hydrophila (strain ATCC 7966 / DSM 30187 / BCRC 13018 / CCUG 14551 / JCM 1027 / KCTC 2358 / NCIMB 9240 / NCTC 8049).